We begin with the raw amino-acid sequence, 334 residues long: SH3 and cysteine-rich domain-containing protein 3 (334 aa).

Positions 1 to 26 (MAQYDQLEDKDSLDIHDNPPAPENVV) are disordered. Residues 7–17 (LEDKDSLDIHD) are compositionally biased toward basic and acidic residues. The segment at 62 to 113 (PHKFKDHYCKKPKFCDVCARMIVLNNKFALRCKNCKTNIHHSCQSYVQFQRC) adopts a Phorbol-ester/DAG-type zinc-finger fold. A compositionally biased stretch (acidic residues) spans 178–190 (EEEAQQPKEDEEG). The segment at 178 to 215 (EEEAQQPKEDEEGAEGKQDGDKKDKTATDDKNKKQQQT) is disordered. The span at 191 to 210 (AEGKQDGDKKDKTATDDKNK) shows a compositional bias: basic and acidic residues. SH3 domains are found at residues 217–276 (SQSH…RVRA) and 277–334 (GERV…LHEL).

In terms of assembly, component of a calcium channel complex with CACNA1S. Expressed in muscles at the muscle triad.

The protein localises to the cytoplasm. It localises to the cell membrane. It is found in the sarcolemma. Its subcellular location is the T-tubule. Functionally, required for normal excitation-contraction coupling in skeletal muscle and for normal muscle contraction in response to membrane depolarization. Required for normal Ca(2+) release from the sarcplasmic reticulum, which ultimately leads to muscle contraction. Probably functions via its effects on muscle calcium channels. Increases CACNA1S channel activity, in addition to its role in enhancing the expression of CACNA1S at the cell membrane. Has a redundant role in promoting the expression of the calcium channel CACNA1S at the cell membrane. The chain is SH3 and cysteine-rich domain-containing protein 3 from Danio rerio (Zebrafish).